We begin with the raw amino-acid sequence, 295 residues long: GTPase Era (295 aa).

An Era-type G domain is found at 7–176 (KTVSVCIIGR…ITSKAKIAPW (170 aa)). The segment at 15–22 (GRPNSGKS) is G1. 15 to 22 (GRPNSGKS) lines the GTP pocket. A G2 region spans residues 41 to 45 (QTTRS). The G3 stretch occupies residues 62-65 (DTPG). GTP contacts are provided by residues 62-66 (DTPGI) and 124-127 (NKID). A G4 region spans residues 124–127 (NKID). The segment at 152–154 (ISA) is G5. The 78-residue stretch at 204-281 (LQQELPYKLT…HLFLFVKVQE (78 aa)) folds into the KH type-2 domain.

It belongs to the TRAFAC class TrmE-Era-EngA-EngB-Septin-like GTPase superfamily. Era GTPase family. As to quaternary structure, monomer.

Its subcellular location is the cytoplasm. It localises to the cell inner membrane. Functionally, an essential GTPase that binds both GDP and GTP, with rapid nucleotide exchange. Plays a role in 16S rRNA processing and 30S ribosomal subunit biogenesis and possibly also in cell cycle regulation and energy metabolism. In Rickettsia bellii (strain RML369-C), this protein is GTPase Era.